Consider the following 729-residue polypeptide: Putative cyclic nucleotide-gated ion channel 19 (729 aa).

Residues methionine 1–valine 172 lie on the Cytoplasmic side of the membrane. The disordered stretch occupies residues serine 52 to proline 82. The span at proline 67–valine 81 shows a compositional bias: low complexity. The helical transmembrane segment at leucine 173–isoleucine 193 threads the bilayer. At glutamine 194–lysine 208 the chain is on the extracellular side. A helical transmembrane segment spans residues valine 209–phenylalanine 229. The Cytoplasmic segment spans residues arginine 230 to lysine 261. A helical membrane pass occupies residues phenylalanine 262–proline 282. The Extracellular portion of the chain corresponds to leucine 283–glutamine 295. A helical transmembrane segment spans residues isoleucine 296–leucine 316. Residues alanine 317–asparagine 332 lie on the Cytoplasmic side of the membrane. A helical transmembrane segment spans residues phenylalanine 333–leucine 353. Over serine 354–serine 451 the chain is Extracellular. A helical membrane pass occupies residues tyrosine 452–alanine 472. The Cytoplasmic portion of the chain corresponds to arginine 473–arginine 729. Residues isoleucine 560 to leucine 677 and glutamate 625 each bind a nucleoside 3',5'-cyclic phosphate. The tract at residues phenylalanine 678–glutamate 694 is calmodulin-binding. Residues arginine 699–asparagine 728 enclose the IQ domain.

Belongs to the cyclic nucleotide-gated cation channel (TC 1.A.1.5) family. In terms of assembly, homotetramer or heterotetramer.

It is found in the cell membrane. Putative cyclic nucleotide-gated ion channel. The protein is Putative cyclic nucleotide-gated ion channel 19 (CNGC19) of Arabidopsis thaliana (Mouse-ear cress).